The chain runs to 518 residues: Wax ester synthase/diacylglycerol acyltransferase 6 (518 aa).

Residues 1–17 (MEIKTRRDTSETSVRKD) are compositionally biased toward basic and acidic residues. Positions 1 to 29 (MEIKTRRDTSETSVRKDDEEEVEEEQPLS) are disordered. Over 1-213 (MEIKTRRDTS…LMAGSRGDSR (213 aa)) the chain is Cytoplasmic. Catalysis depends on H163, which acts as the Proton acceptor. A disordered region spans residues 185 to 205 (PDELPSLPNQNRSSSRSSRLM). Residues 214–234 (FLWLVMVIWSAIMLVLNTVCD) form a helical membrane-spanning segment. Topologically, residues 235–518 (ALEFIATTMF…VQERDSRSLD (284 aa)) are lumenal. The N-linked (GlcNAc...) asparagine glycan is linked to N430.

In the N-terminal section; belongs to the long-chain O-acyltransferase family. Expressed in roots, stems, leaves, flowers and siliques.

Its subcellular location is the cell membrane. The protein resides in the endoplasmic reticulum membrane. It is found in the golgi apparatus membrane. It catalyses the reaction an acyl-CoA + a 1,2-diacyl-sn-glycerol = a triacyl-sn-glycerol + CoA. The catalysed reaction is a long chain fatty alcohol + a fatty acyl-CoA = a wax ester + CoA. It participates in glycerolipid metabolism; triacylglycerol biosynthesis. It functions in the pathway lipid metabolism. Its function is as follows. Bifunctional wax ester synthase/diacylglycerol acyltransferase that uses acyl-CoAs with 16, 18 and 20 carbons as substrates, preferably in combination with 16:0ol alcohol. Involved in cuticular wax biosynthesis. The sequence is that of Wax ester synthase/diacylglycerol acyltransferase 6 from Arabidopsis thaliana (Mouse-ear cress).